Here is a 784-residue protein sequence, read N- to C-terminus: Endonuclease MutS2 (784 aa).

335 to 342 (GPNTGGKT) contacts ATP. One can recognise a Smr domain in the interval 709 to 784 (LDLRGERYED…GTGVTIVELK (76 aa)).

The protein belongs to the DNA mismatch repair MutS family. MutS2 subfamily. Homodimer. Binds to stalled ribosomes, contacting rRNA.

In terms of biological role, endonuclease that is involved in the suppression of homologous recombination and thus may have a key role in the control of bacterial genetic diversity. Acts as a ribosome collision sensor, splitting the ribosome into its 2 subunits. Detects stalled/collided 70S ribosomes which it binds and splits by an ATP-hydrolysis driven conformational change. Acts upstream of the ribosome quality control system (RQC), a ribosome-associated complex that mediates the extraction of incompletely synthesized nascent chains from stalled ribosomes and their subsequent degradation. Probably generates substrates for RQC. In Geobacillus sp. (strain WCH70), this protein is Endonuclease MutS2.